An 83-amino-acid polypeptide reads, in one-letter code: UPF0297 protein CLK_1948 (83 aa).

This sequence belongs to the UPF0297 family.

The sequence is that of UPF0297 protein CLK_1948 from Clostridium botulinum (strain Loch Maree / Type A3).